The following is a 117-amino-acid chain: Large ribosomal subunit protein uL18 (117 aa).

It belongs to the universal ribosomal protein uL18 family. Part of the 50S ribosomal subunit; part of the 5S rRNA/L5/L18/L25 subcomplex. Contacts the 5S and 23S rRNAs.

Its function is as follows. This is one of the proteins that bind and probably mediate the attachment of the 5S RNA into the large ribosomal subunit, where it forms part of the central protuberance. This is Large ribosomal subunit protein uL18 from Klebsiella pneumoniae (strain 342).